Consider the following 359-residue polypeptide: Guanine nucleotide-binding protein subunit alpha-11 (359 aa).

S-palmitoyl cysteine attachment occurs at residues C9 and C10. A G-alpha domain is found at 38–359; it reads RELKLLLLGT…QLNLKEYNLV (322 aa). The interval 41-54 is G1 motif; the sequence is KLLLLGTGESGKST. Residues 46–53 and 180–183 each bind GTP; these read GTGESGKS and LRVR. Position 53 (S53) interacts with Mg(2+). The segment at 178–186 is G2 motif; the sequence is DVLRVRVPT. T186 provides a ligand contact to Mg(2+). Positions 201–210 are G3 motif; that stretch reads FRMVDVGGQR. The G4 motif stretch occupies residues 270–277; sequence ILFLNKKD. GTP is bound by residues 274 to 277 and A331; that span reads NKKD. The segment at 329–334 is G5 motif; that stretch reads TCATDT.

It belongs to the G-alpha family. G(q) subfamily. G proteins are composed of 3 units; alpha, beta and gamma. The alpha chain contains the guanine nucleotide binding site. Interacts with RGS22. Interacts with NTSR1.

It is found in the cell membrane. It localises to the cytoplasm. It carries out the reaction GTP + H2O = GDP + phosphate + H(+). Its function is as follows. Guanine nucleotide-binding proteins (G proteins) function as transducers downstream of G protein-coupled receptors (GPCRs) in numerous signaling cascades. The alpha chain contains the guanine nucleotide binding site and alternates between an active, GTP-bound state and an inactive, GDP-bound state. Signaling by an activated GPCR promotes GDP release and GTP binding. The alpha subunit has a low GTPase activity that converts bound GTP to GDP, thereby terminating the signal. Both GDP release and GTP hydrolysis are modulated by numerous regulatory proteins. Signaling is mediated via phospholipase C-beta-dependent inositol lipid hydrolysis for signal propagation: activates phospholipase C-beta: following GPCR activation, GNA11 activates PLC-beta (PLCB1, PLCB2, PLCB3 or PLCB4), leading to production of diacylglycerol (DAG) and inositol 1,4,5-trisphosphate (IP3). Transduces FFAR4 signaling in response to long-chain fatty acids (LCFAs). Together with GNAQ, required for heart development. In the respiratory epithelium, transmits OXGR1-dependent signals that lead to downstream intracellular Ca(2+) release and mucocilliary clearance of airborne pathogens. The chain is Guanine nucleotide-binding protein subunit alpha-11 (Gna11) from Mus musculus (Mouse).